Here is a 412-residue protein sequence, read N- to C-terminus: MIQAVTSCFQFKRCTTHLLEFIAADKPMVGDALADPSDEKLAHFVRTTAALKIEYRCAQGPSPRVFELALAQLRALNRIAEWESGWVVYPLYTCARQLVQMAAALDARTERAAEAAQCGDLATEDHLTQCGRAVHMSLNLCLKDRDPAASNKRHGAYYFALLLFRTYARLGAHSLVTNMVKVLESRAQDLPPVERAFGERRALTVTYCYYLGRYHACRRADYEKGFRWLNTALLTCHRDHTRHHQLILTYLVPVAFLARRWYPKHHVIAAWPPPQDPAAIHYAALVAALRSGDLGLYDRELVRMQLPLLRRGLYLPLSHLRPYILLRLVKAVWRLSGGSSQLPIRIIAAALAYSTSATPDAGGERLLDHTECLLANLIARGYVKGYLSHGNRVLVVSRTEPFPRLVRSETAA.

The 182-residue stretch at 220–401 (ADYEKGFRWL…RVLVVSRTEP (182 aa)) folds into the PCI domain.

The protein belongs to the CSN12 family. As to quaternary structure, component of a COP9 signalosome-like (CSN) complex.

The protein localises to the cytoplasm. The protein resides in the nucleus. Its function is as follows. Component of the COP9 signalosome (CSN) complex that acts as an regulator of the ubiquitin (Ubl) conjugation pathway by mediating the deneddylation of the cullin subunit of SCF-type E3 ubiquitin-protein ligase complexes. The CSN complex is involved in the regulation of the mating pheromone response. This chain is COP9 signalosome complex subunit 12 (CSN12), found in Eremothecium gossypii (strain ATCC 10895 / CBS 109.51 / FGSC 9923 / NRRL Y-1056) (Yeast).